A 212-amino-acid chain; its full sequence is Pyridoxine/pyridoxamine 5'-phosphate oxidase (212 aa).

Substrate-binding positions include 7–10 (RREY) and Lys66. FMN contacts are provided by residues 61–66 (RIVLLK), 76–77 (YT), Lys83, and Gln105. The substrate site is built by Tyr123, Arg127, and Ser131. FMN contacts are provided by residues 140-141 (QS) and Trp185. 191-193 (RLH) is a substrate binding site. Arg195 contacts FMN.

The protein belongs to the pyridoxamine 5'-phosphate oxidase family. Homodimer. It depends on FMN as a cofactor.

It carries out the reaction pyridoxamine 5'-phosphate + O2 + H2O = pyridoxal 5'-phosphate + H2O2 + NH4(+). The enzyme catalyses pyridoxine 5'-phosphate + O2 = pyridoxal 5'-phosphate + H2O2. Its pathway is cofactor metabolism; pyridoxal 5'-phosphate salvage; pyridoxal 5'-phosphate from pyridoxamine 5'-phosphate: step 1/1. It participates in cofactor metabolism; pyridoxal 5'-phosphate salvage; pyridoxal 5'-phosphate from pyridoxine 5'-phosphate: step 1/1. In terms of biological role, catalyzes the oxidation of either pyridoxine 5'-phosphate (PNP) or pyridoxamine 5'-phosphate (PMP) into pyridoxal 5'-phosphate (PLP). This Idiomarina loihiensis (strain ATCC BAA-735 / DSM 15497 / L2-TR) protein is Pyridoxine/pyridoxamine 5'-phosphate oxidase.